The primary structure comprises 449 residues: UDP-glycosyltransferase 76E7 (449 aa).

UDP-alpha-D-glucose-binding positions include Ser275, 333 to 335 (APQ), 350 to 358 (HCGWNSTLE), and 372 to 375 (TTDQ).

It belongs to the UDP-glycosyltransferase family.

The protein is UDP-glycosyltransferase 76E7 (UGT76E7) of Arabidopsis thaliana (Mouse-ear cress).